Consider the following 124-residue polypeptide: MRHVGDRGEAVVAAWLQTQQCQILAQNWSCPWGELDIIACDPGGVVLFVEVKTRGSYNWDRDGLDAISPSKQRKLILAAQAFLESQPQWQEHPCRFDVALVRHQRGAYHLHHYLAQAFTLDSIK.

This sequence belongs to the UPF0102 family.

This chain is UPF0102 protein tll1737, found in Thermosynechococcus vestitus (strain NIES-2133 / IAM M-273 / BP-1).